A 237-amino-acid polypeptide reads, in one-letter code: Uridylate kinase (237 aa).

An ATP-binding site is contributed by 11–14 (KLSG). G52 contributes to the UMP binding site. 2 residues coordinate ATP: G53 and R57. Residues D72 and 134 to 141 (TGYSYFTT) each bind UMP. The ATP site is built by N162, Y168, and D171.

Belongs to the UMP kinase family. In terms of assembly, homohexamer.

The protein localises to the cytoplasm. It catalyses the reaction UMP + ATP = UDP + ADP. Its pathway is pyrimidine metabolism; CTP biosynthesis via de novo pathway; UDP from UMP (UMPK route): step 1/1. Its activity is regulated as follows. Inhibited by UTP. Functionally, catalyzes the reversible phosphorylation of UMP to UDP. This chain is Uridylate kinase, found in Mycoplasma capricolum subsp. capricolum (strain California kid / ATCC 27343 / NCTC 10154).